We begin with the raw amino-acid sequence, 180 residues long: Large ribosomal subunit protein uL18m (180 aa).

The protein belongs to the universal ribosomal protein uL18 family. As to quaternary structure, component of the mitochondrial ribosome large subunit (39S) which comprises a 16S rRNA and about 50 distinct proteins.

The protein resides in the mitochondrion. Its function is as follows. Together with thiosulfate sulfurtransferase (TST), acts as a mitochondrial import factor for the cytosolic 5S rRNA. The precursor form shows RNA chaperone activity; is able to fold the 5S rRNA into an import-competent conformation that is recognized by rhodanese (TST). Both the cytoplasmic and mitochondrial forms are able to bind to the helix IV-loop D in the gamma domain of the 5S rRNA. The polypeptide is Large ribosomal subunit protein uL18m (MRPL18) (Bos taurus (Bovine)).